Consider the following 339-residue polypeptide: Phenylalanine--tRNA ligase alpha subunit (339 aa).

Glutamate 253 serves as a coordination point for Mg(2+).

The protein belongs to the class-II aminoacyl-tRNA synthetase family. Phe-tRNA synthetase alpha subunit type 1 subfamily. As to quaternary structure, tetramer of two alpha and two beta subunits. It depends on Mg(2+) as a cofactor.

It localises to the cytoplasm. It catalyses the reaction tRNA(Phe) + L-phenylalanine + ATP = L-phenylalanyl-tRNA(Phe) + AMP + diphosphate + H(+). The protein is Phenylalanine--tRNA ligase alpha subunit of Thioalkalivibrio sulfidiphilus (strain HL-EbGR7).